A 208-amino-acid chain; its full sequence is Small ribosomal subunit protein uS9c (208 aa).

Residues 1-52 (MASITNLASSLSSLSFSSQVSQRPNTISFPRANSVFALPAKSARRASLSITA) constitute a chloroplast transit peptide.

Belongs to the universal ribosomal protein uS9 family.

It localises to the plastid. The protein resides in the chloroplast. Functionally, binds directly to 16S ribosomal RNA. This chain is Small ribosomal subunit protein uS9c (RPS9), found in Arabidopsis thaliana (Mouse-ear cress).